A 200-amino-acid chain; its full sequence is NAD(P)H dehydrogenase (quinone) (200 aa).

The Flavodoxin-like domain maps to 4–191 (VLVLYYSSYG…DIARYQGKHV (188 aa)). Residues 10–15 (SSYGHV) and 79–81 (TRF) each bind FMN. Tyr-12 lines the NAD(+) pocket. A substrate-binding site is contributed by Trp-99. FMN-binding positions include 114–120 (STGTQHG) and His-135.

The protein belongs to the WrbA family. FMN is required as a cofactor.

The catalysed reaction is a quinone + NADH + H(+) = a quinol + NAD(+). It catalyses the reaction a quinone + NADPH + H(+) = a quinol + NADP(+). The protein is NAD(P)H dehydrogenase (quinone) of Burkholderia ambifaria (strain MC40-6).